The following is a 230-amino-acid chain: Mediator of RNA polymerase II transcription subunit 7 (230 aa).

2 disordered regions span residues 1-22 (MSRE…PPPP) and 206-230 (QSQS…SDSQ).

This sequence belongs to the Mediator complex subunit 7 family. Component of the Mediator complex.

It is found in the nucleus. Component of the Mediator complex, a coactivator involved in the regulated transcription of nearly all RNA polymerase II-dependent genes. Mediator functions as a bridge to convey information from gene-specific regulatory proteins to the basal RNA polymerase II transcription machinery. Mediator is recruited to promoters by direct interactions with regulatory proteins and serves as a scaffold for the assembly of a functional preinitiation complex with RNA polymerase II and the general transcription factors. The protein is Mediator of RNA polymerase II transcription subunit 7 (MED7) of Candida glabrata (strain ATCC 2001 / BCRC 20586 / JCM 3761 / NBRC 0622 / NRRL Y-65 / CBS 138) (Yeast).